The sequence spans 276 residues: Tyrosinase (276 aa).

The Cu cation site is built by H38, H56, H66, H193, H197, and H219.

Belongs to the tyrosinase family. Requires Cu(2+) as cofactor.

It catalyses the reaction 2 L-dopa + O2 = 2 L-dopaquinone + 2 H2O. It carries out the reaction L-tyrosine + O2 = L-dopaquinone + H2O. This is a copper-containing oxidase that functions in the formation of pigments such as melanins and other polyphenolic compounds. The protein is Tyrosinase (melC2) of Streptomyces galbus.